We begin with the raw amino-acid sequence, 318 residues long: UAP56-interacting factor (318 aa).

Met1 carries the post-translational modification N-acetylmethionine. Positions 1–25 (MNRFGTRLVGATATSSPPPKARSNE) are disordered. At Thr14 the chain carries Phosphothreonine. 2 positions are modified to phosphoserine: Ser16 and Ser23. A UAP56-binding motif motif is present at residues 26-44 (NLDKIDMSLDDIIKLNRKE). Residue Ser61 is modified to Phosphoserine. The disordered stretch occupies residues 79–100 (GFGKTSLNRRGRVMPGKRRPNG). Basic residues predominate over residues 85-98 (LNRRGRVMPGKRRP). Ser118 carries the phosphoserine modification. A Glycyl lysine isopeptide (Lys-Gly) (interchain with G-Cter in SUMO1) cross-link involves residue Lys140. Lys261 participates in a covalent cross-link: Glycyl lysine isopeptide (Lys-Gly) (interchain with G-Cter in SUMO2).

This sequence belongs to the UIF family. Interacts with CHTOP. Interacts with DDX39B/UAP56 and NXF1; interaction with DDX39B/UAP56 and NXF1 are mutually exclusive. Interacts with SSRP1; required for its recruitment to mRNAs. Expressed in a wide variety of cancer types.

The protein localises to the nucleus. It localises to the nucleoplasm. It is found in the nucleus speckle. Required for mRNA export from the nucleus to the cytoplasm. Acts as an adapter that uses the DDX39B/UAP56-NFX1 pathway to ensure efficient mRNA export and delivering to the nuclear pore. Associates with spliced and unspliced mRNAs simultaneously with ALYREF/THOC4. This is UAP56-interacting factor (FYTTD1) from Homo sapiens (Human).